The primary structure comprises 155 residues: Protein-export protein SecB (155 aa).

The protein belongs to the SecB family. Homotetramer, a dimer of dimers. One homotetramer interacts with 1 SecA dimer.

Its subcellular location is the cytoplasm. One of the proteins required for the normal export of preproteins out of the cell cytoplasm. It is a molecular chaperone that binds to a subset of precursor proteins, maintaining them in a translocation-competent state. It also specifically binds to its receptor SecA. The chain is Protein-export protein SecB from Cronobacter sakazakii (strain ATCC BAA-894) (Enterobacter sakazakii).